The following is a 193-amino-acid chain: Ion-translocating oxidoreductase complex subunit A (193 aa).

Helical transmembrane passes span 5–25 (VLLL…FLGL), 39–59 (IGMS…SYLV), 63–83 (ILIP…VIAV), 102–122 (LLGI…VALL), 134–154 (AVYG…FAAL), and 171–191 (SIAL…TGLV).

Belongs to the NqrDE/RnfAE family. The complex is composed of six subunits: RnfA, RnfB, RnfC, RnfD, RnfE and RnfG.

It localises to the cell inner membrane. Its function is as follows. Part of a membrane-bound complex that couples electron transfer with translocation of ions across the membrane. The chain is Ion-translocating oxidoreductase complex subunit A from Pseudoalteromonas translucida (strain TAC 125).